We begin with the raw amino-acid sequence, 65 residues long: Large ribosomal subunit protein bL35 (65 aa).

A disordered region spans residues 1-51; it reads MPKIKTNRGAAKRFRKSASGRVKRGNAFTSHILTHKTRKNKRNLRGTSMVS. 2 stretches are compositionally biased toward basic residues: residues 10 to 24 and 33 to 44; these read AAKRFRKSASGRVKR and LTHKTRKNKRNL.

This sequence belongs to the bacterial ribosomal protein bL35 family.

The polypeptide is Large ribosomal subunit protein bL35 (Pelobacter propionicus (strain DSM 2379 / NBRC 103807 / OttBd1)).